Reading from the N-terminus, the 304-residue chain is Putative S-adenosyl-L-methionine-dependent methyltransferase MSMEG_1481/MSMEI_1445 (304 aa).

S-adenosyl-L-methionine contacts are provided by residues aspartate 127 and 156 to 157; that span reads DL.

This sequence belongs to the UPF0677 family.

Exhibits S-adenosyl-L-methionine-dependent methyltransferase activity. The polypeptide is Putative S-adenosyl-L-methionine-dependent methyltransferase MSMEG_1481/MSMEI_1445 (Mycolicibacterium smegmatis (strain ATCC 700084 / mc(2)155) (Mycobacterium smegmatis)).